We begin with the raw amino-acid sequence, 119 residues long: EVKLLESGGGLVQPGGSLKLSCAASGFDFSRYWMSWVRQAPGKGLEWIGEINPDSSTINYTPSLKDKFIISRDNAKNTLYLQMSKVRSEDTALYYCARLHYYGYAAYWGQGTLVTVSAE.

The Ig-like domain occupies 1 to 117 (EVKLLESGGG…WGQGTLVTVS (117 aa)).

The sequence is that of Ig heavy chain V region X44 from Mus musculus (Mouse).